The following is a 148-amino-acid chain: ASCH domain-containing ribonuclease (148 aa).

The region spanning Ser-13 to Asn-70 is the ASCH domain.

It depends on Mn(2+) as a cofactor. Requires Ni(2+) as cofactor.

In terms of biological role, shows sequence-specific endoribonuclease activity towards single-stranded RNA (ssRNA), with a preference for the bond between pyrimidine and adenine nucleotides. May also have 5'-exonuclease activity. The polypeptide is ASCH domain-containing ribonuclease (Zymomonas mobilis subsp. mobilis (strain ATCC 10988 / DSM 424 / LMG 404 / NCIMB 8938 / NRRL B-806 / ZM1)).